A 1056-amino-acid polypeptide reads, in one-letter code: Carbamoyl phosphate synthase large chain (1056 aa).

Residues 1 to 401 (MPKRTDIHKI…ALHKAVRSLE (401 aa)) are carboxyphosphate synthetic domain. The ATP site is built by Arg-129, Arg-169, Gly-175, Gly-176, Lys-208, Ile-210, Glu-215, Gly-241, Ile-242, His-243, Gln-284, and Glu-298. The 195-residue stretch at 133-327 (KELMNELGEP…IAKMAAKIAV (195 aa)) folds into the ATP-grasp 1 domain. 3 residues coordinate Mg(2+): Gln-284, Glu-298, and Asn-300. Mn(2+) contacts are provided by Gln-284, Glu-298, and Asn-300. The interval 402 to 546 (IDEKDLFSAE…YSAYDHENES (145 aa)) is oligomerization domain. The carbamoyl phosphate synthetic domain stretch occupies residues 547–929 (QRTKKPSILV…ALHKAFSGAH (383 aa)). The ATP-grasp 2 domain occupies 671–861 (DQVITDLNLK…MAQVATRVIL (191 aa)). Arg-707, Ala-746, Leu-748, Glu-752, Gly-777, Val-778, His-779, Ser-780, Gln-820, and Glu-832 together coordinate ATP. Positions 820, 832, and 834 each coordinate Mg(2+). 3 residues coordinate Mn(2+): Gln-820, Glu-832, and Asn-834. The MGS-like domain occupies 930-1056 (IQVPNDGKIL…DQSLEAITIK (127 aa)). The tract at residues 930–1056 (IQVPNDGKIL…DQSLEAITIK (127 aa)) is allosteric domain.

This sequence belongs to the CarB family. As to quaternary structure, composed of two chains; the small (or glutamine) chain promotes the hydrolysis of glutamine to ammonia, which is used by the large (or ammonia) chain to synthesize carbamoyl phosphate. Tetramer of heterodimers (alpha,beta)4. It depends on Mg(2+) as a cofactor. Requires Mn(2+) as cofactor.

The catalysed reaction is hydrogencarbonate + L-glutamine + 2 ATP + H2O = carbamoyl phosphate + L-glutamate + 2 ADP + phosphate + 2 H(+). It catalyses the reaction hydrogencarbonate + NH4(+) + 2 ATP = carbamoyl phosphate + 2 ADP + phosphate + 2 H(+). It participates in amino-acid biosynthesis; L-arginine biosynthesis; carbamoyl phosphate from bicarbonate: step 1/1. The protein operates within pyrimidine metabolism; UMP biosynthesis via de novo pathway; (S)-dihydroorotate from bicarbonate: step 1/3. In terms of biological role, large subunit of the glutamine-dependent carbamoyl phosphate synthetase (CPSase). CPSase catalyzes the formation of carbamoyl phosphate from the ammonia moiety of glutamine, carbonate, and phosphate donated by ATP, constituting the first step of 2 biosynthetic pathways, one leading to arginine and/or urea and the other to pyrimidine nucleotides. The large subunit (synthetase) binds the substrates ammonia (free or transferred from glutamine from the small subunit), hydrogencarbonate and ATP and carries out an ATP-coupled ligase reaction, activating hydrogencarbonate by forming carboxy phosphate which reacts with ammonia to form carbamoyl phosphate. This chain is Carbamoyl phosphate synthase large chain, found in Limosilactobacillus reuteri (strain DSM 20016) (Lactobacillus reuteri).